Consider the following 296-residue polypeptide: Phosphatidylserine decarboxylase proenzyme (296 aa).

Catalysis depends on charge relay system; for autoendoproteolytic cleavage activity residues Asp-113, His-169, and Ser-256. Ser-256 (schiff-base intermediate with substrate; via pyruvic acid; for decarboxylase activity) is an active-site residue. Ser-256 bears the Pyruvic acid (Ser); by autocatalysis mark.

The protein belongs to the phosphatidylserine decarboxylase family. PSD-B subfamily. Prokaryotic type II sub-subfamily. As to quaternary structure, heterodimer of a large membrane-associated beta subunit and a small pyruvoyl-containing alpha subunit. Pyruvate serves as cofactor. Is synthesized initially as an inactive proenzyme. Formation of the active enzyme involves a self-maturation process in which the active site pyruvoyl group is generated from an internal serine residue via an autocatalytic post-translational modification. Two non-identical subunits are generated from the proenzyme in this reaction, and the pyruvate is formed at the N-terminus of the alpha chain, which is derived from the carboxyl end of the proenzyme. The autoendoproteolytic cleavage occurs by a canonical serine protease mechanism, in which the side chain hydroxyl group of the serine supplies its oxygen atom to form the C-terminus of the beta chain, while the remainder of the serine residue undergoes an oxidative deamination to produce ammonia and the pyruvoyl prosthetic group on the alpha chain. During this reaction, the Ser that is part of the protease active site of the proenzyme becomes the pyruvoyl prosthetic group, which constitutes an essential element of the active site of the mature decarboxylase.

The protein resides in the cell membrane. The catalysed reaction is a 1,2-diacyl-sn-glycero-3-phospho-L-serine + H(+) = a 1,2-diacyl-sn-glycero-3-phosphoethanolamine + CO2. It functions in the pathway phospholipid metabolism; phosphatidylethanolamine biosynthesis; phosphatidylethanolamine from CDP-diacylglycerol: step 2/2. Its function is as follows. Catalyzes the formation of phosphatidylethanolamine (PtdEtn) from phosphatidylserine (PtdSer). The polypeptide is Phosphatidylserine decarboxylase proenzyme (Clostridium botulinum (strain Alaska E43 / Type E3)).